The sequence spans 175 residues: NADH-ubiquinone oxidoreductase chain 6 (175 aa).

5 helical membrane passes run 1–21, 25–45, 47–67, 88–108, and 149–169; these read MMTY…VSFS, SPIY…GIVL, FGGS…MLVV, AVLA…CYIL, and YGTW…LVIM.

Belongs to the complex I subunit 6 family. Core subunit of respiratory chain NADH dehydrogenase (Complex I) which is composed of 45 different subunits.

The protein localises to the mitochondrion inner membrane. It carries out the reaction a ubiquinone + NADH + 5 H(+)(in) = a ubiquinol + NAD(+) + 4 H(+)(out). Core subunit of the mitochondrial membrane respiratory chain NADH dehydrogenase (Complex I) which catalyzes electron transfer from NADH through the respiratory chain, using ubiquinone as an electron acceptor. Essential for the catalytic activity and assembly of complex I. The sequence is that of NADH-ubiquinone oxidoreductase chain 6 (MT-ND6) from Felis catus (Cat).